A 343-amino-acid chain; its full sequence is 4-hydroxy-2-oxovalerate aldolase 1 (343 aa).

The Pyruvate carboxyltransferase domain occupies 8-260; sequence ITVHDMSLRD…ETGVDVFAIS (253 aa). Residue 16 to 17 coordinates substrate; that stretch reads RD. Asp-17 provides a ligand contact to Mn(2+). The Proton acceptor role is filled by His-20. The substrate site is built by Ser-170 and His-199. Mn(2+) contacts are provided by His-199 and His-201. Tyr-290 contributes to the substrate binding site.

The protein belongs to the 4-hydroxy-2-oxovalerate aldolase family.

It carries out the reaction (S)-4-hydroxy-2-oxopentanoate = acetaldehyde + pyruvate. The chain is 4-hydroxy-2-oxovalerate aldolase 1 (bphI) from Burkholderia cenocepacia (strain ATCC BAA-245 / DSM 16553 / LMG 16656 / NCTC 13227 / J2315 / CF5610) (Burkholderia cepacia (strain J2315)).